A 1460-amino-acid polypeptide reads, in one-letter code: DNA-directed RNA polymerase III subunit RPC1 (1460 aa).

Residues Cys-67, Cys-70, Cys-77, His-80, Cys-107, Cys-110, and Cys-154 each coordinate Zn(2+). Mg(2+)-binding residues include Asp-511, Asp-513, and Asp-515. Positions 858–870 (PPEFLFHAISGRE) are bridging helix.

It belongs to the RNA polymerase beta' chain family. In terms of assembly, component of the RNA polymerase III (Pol III) complex consisting of 17 subunits.

It localises to the nucleus. It carries out the reaction RNA(n) + a ribonucleoside 5'-triphosphate = RNA(n+1) + diphosphate. DNA-dependent RNA polymerase catalyzes the transcription of DNA into RNA using the four ribonucleoside triphosphates as substrates. Largest and catalytic core component of RNA polymerase III which synthesizes small RNAs, such as 5S rRNA and tRNAs. Forms the polymerase active center together with the second largest subunit. A single-stranded DNA template strand of the promoter is positioned within the central active site cleft of Pol III. A bridging helix emanates from RPC1 and crosses the cleft near the catalytic site and is thought to promote translocation of Pol III by acting as a ratchet that moves the RNA-DNA hybrid through the active site by switching from straight to bent conformations at each step of nucleotide addition. This is DNA-directed RNA polymerase III subunit RPC1 (RPO31) from Saccharomyces cerevisiae (strain ATCC 204508 / S288c) (Baker's yeast).